The following is a 170-amino-acid chain: Alpha-crystallin A chain (170 aa).

At M1 the chain carries N-acetylmethionine. The interval M1–E63 is required for complex formation with BFSP1 and BFSP2. At Q6 the chain carries Deamidated glutamine; partial. A Phosphoserine modification is found at S45. The residue at position 50 (Q50) is a Deamidated glutamine; partial. One can recognise a sHSP domain in the interval L52–E161. K70 and K99 each carry N6-acetyllysine. Zn(2+) is bound at residue H100. Residue N101 is modified to Deamidated asparagine; partial. Positions 102, 107, and 151 each coordinate Zn(2+). The interval P144–S170 is disordered. The segment covering D148 to P164 has biased composition (basic and acidic residues). S159 carries an O-linked (GlcNAc) serine glycan.

It belongs to the small heat shock protein (HSP20) family. As to quaternary structure, heteromer composed of three CRYAA and one CRYAB subunits. Inter-subunit bridging via zinc ions enhances stability, which is crucial as there is no protein turn over in the lens. Can also form homodimers and homotetramers (dimers of dimers) which serve as the building blocks of homooligomers. Within homooligomers, the zinc-binding motif is created from residues of 3 different molecules. His-100 and Glu-102 from one molecule are ligands of the zinc ion, and His-107 and His-151 residues from additional molecules complete the site with tetrahedral coordination geometry. Part of a complex required for lens intermediate filament formation composed of BFSP1, BFSP2 and CRYAA. Post-translationally, acetylation at Lys-70 may increase chaperone activity. In terms of processing, undergoes age-dependent proteolytical cleavage at the C-terminus.

Its subcellular location is the cytoplasm. It localises to the nucleus. Its function is as follows. Contributes to the transparency and refractive index of the lens. Acts as a chaperone, preventing aggregation of various proteins under a wide range of stress conditions. Required for the correct formation of lens intermediate filaments as part of a complex composed of BFSP1, BFSP2 and CRYAA. This is Alpha-crystallin A chain (CRYAA) from Bradypus variegatus (Brown-throated three-fingered sloth).